A 214-amino-acid chain; its full sequence is A-type ATP synthase subunit D (214 aa).

The protein belongs to the V-ATPase D subunit family. In terms of assembly, has multiple subunits with at least A(3), B(3), C, D, E, F, H, I and proteolipid K(x).

It is found in the cell membrane. Functionally, component of the A-type ATP synthase that produces ATP from ADP in the presence of a proton gradient across the membrane. This chain is A-type ATP synthase subunit D, found in Pyrococcus furiosus (strain ATCC 43587 / DSM 3638 / JCM 8422 / Vc1).